We begin with the raw amino-acid sequence, 121 residues long: MGNLIKELQDEQCRTDLADFCVGDTIRVATNISEGGKERVQVFQGTVMARKGGGAGETVSLHRVAYGEGMEKSFLLNSPKIVSIEVVKRGKVSRARLFYLRGKTGKAAKVKELIGSRAAKK.

The protein belongs to the bacterial ribosomal protein bL19 family.

Its function is as follows. This protein is located at the 30S-50S ribosomal subunit interface and may play a role in the structure and function of the aminoacyl-tRNA binding site. This chain is Large ribosomal subunit protein bL19, found in Chlamydia trachomatis serovar L2 (strain ATCC VR-902B / DSM 19102 / 434/Bu).